A 125-amino-acid chain; its full sequence is UPF0325 protein Ping_0715 (125 aa).

This sequence belongs to the UPF0325 family.

The polypeptide is UPF0325 protein Ping_0715 (Psychromonas ingrahamii (strain DSM 17664 / CCUG 51855 / 37)).